A 702-amino-acid polypeptide reads, in one-letter code: Epsin-1 (702 aa).

Residues 10-142 (NFSKGYTDTQ…EDEHALKEAR (133 aa)) form the ENTH domain. 2 stretches are compositionally biased toward basic and acidic residues: residues 136-160 (HALKEARGDSRERDRDRDRTRSSRF) and 183-192 (SRYDDDDRDH). The tract at residues 136–285 (HALKEARGDS…HQREREQQEQ (150 aa)) is disordered. Positions 193–214 (RSRRRSRSRRPGRSRSRRRSRR) are enriched in basic residues. A phosphoserine mark is found at serine 212, serine 216, serine 218, and serine 223. UIM domains are found at residues 226–245 (ENDPELQRVIEESKRQAEED) and 254–273 (DSEAELQKAIQLSKEEDEAR). The span at 230–248 (ELQRVIEESKRQAEEDAKR) shows a compositional bias: basic and acidic residues. A Phosphoserine modification is found at serine 255. A compositionally biased stretch (basic and acidic residues) spans 266–283 (SKEEDEARQRHQREREQQ). Threonine 406 carries the phosphothreonine modification. 2 disordered regions span residues 504 to 589 (NHTG…RTGD) and 683 to 702 (PMQGMQQQSMQPQVGSLIDL). Residues 514–534 (TGLQRQTTGYTGNNNPYSRPL) show a composition bias toward polar residues. The segment covering 535–549 (QSQSTGILQQQQQQS) has biased composition (low complexity). Polar residues predominate over residues 557 to 577 (KTGSNNPFAQFSNLPSQSTAP). Residues 683-695 (PMQGMQQQSMQPQ) are compositionally biased toward low complexity.

This sequence belongs to the epsin family.

The protein localises to the cytoplasm. Its subcellular location is the membrane. In terms of biological role, binds to membranes enriched in phosphatidylinositol 3,5-bisphosphate (PtdIns(3,5)P2) and phosphatidylinositol 4,5-bisphosphate (PtdIns(4,5)P2). Required for endocytosis and localization of actin. The sequence is that of Epsin-1 (ent1) from Schizosaccharomyces pombe (strain 972 / ATCC 24843) (Fission yeast).